Here is a 902-residue protein sequence, read N- to C-terminus: Protein translocase subunit SecA (902 aa).

ATP is bound by residues Gln87, 105 to 109 (GEGKT), and Asp512. The segment at 836–902 (DVEKVEEQHR…KFKQCCGKLK (67 aa)) is disordered. The span at 840–863 (VEEQHRKSENAPREYQHEEVEHVG) shows a compositional bias: basic and acidic residues. The Zn(2+) site is built by Cys886, Cys888, Cys897, and Cys898.

This sequence belongs to the SecA family. Monomer and homodimer. Part of the essential Sec protein translocation apparatus which comprises SecA, SecYEG and auxiliary proteins SecDF-YajC and YidC. The cofactor is Zn(2+).

The protein resides in the cell inner membrane. Its subcellular location is the cytoplasm. The catalysed reaction is ATP + H2O + cellular proteinSide 1 = ADP + phosphate + cellular proteinSide 2.. Its function is as follows. Part of the Sec protein translocase complex. Interacts with the SecYEG preprotein conducting channel. Has a central role in coupling the hydrolysis of ATP to the transfer of proteins into and across the cell membrane, serving both as a receptor for the preprotein-SecB complex and as an ATP-driven molecular motor driving the stepwise translocation of polypeptide chains across the membrane. The polypeptide is Protein translocase subunit SecA (Pseudoalteromonas translucida (strain TAC 125)).